We begin with the raw amino-acid sequence, 439 residues long: Proline--tRNA ligase (439 aa).

This sequence belongs to the class-II aminoacyl-tRNA synthetase family. ProS type 2 subfamily. As to quaternary structure, homodimer.

It is found in the cytoplasm. The enzyme catalyses tRNA(Pro) + L-proline + ATP = L-prolyl-tRNA(Pro) + AMP + diphosphate. Its function is as follows. Catalyzes the attachment of proline to tRNA(Pro) in a two-step reaction: proline is first activated by ATP to form Pro-AMP and then transferred to the acceptor end of tRNA(Pro). The sequence is that of Proline--tRNA ligase from Phenylobacterium zucineum (strain HLK1).